The chain runs to 259 residues: GTP cyclohydrolase FolE2 (259 aa).

This sequence belongs to the GTP cyclohydrolase IV family.

It catalyses the reaction GTP + H2O = 7,8-dihydroneopterin 3'-triphosphate + formate + H(+). The protein operates within cofactor biosynthesis; 7,8-dihydroneopterin triphosphate biosynthesis; 7,8-dihydroneopterin triphosphate from GTP: step 1/1. Functionally, converts GTP to 7,8-dihydroneopterin triphosphate. This is GTP cyclohydrolase FolE2 from Halorhodospira halophila (strain DSM 244 / SL1) (Ectothiorhodospira halophila (strain DSM 244 / SL1)).